The sequence spans 377 residues: Membrane progestin receptor epsilon (377 aa).

Residues 1 to 40 (MPRRLQPRGAGTKGPPAPAPAASGAARNSHSAASRDPPAS) are disordered. Residues 1–86 (MPRRLQPRGA…VLKPTNETLN (86 aa)) lie on the Cytoplasmic side of the membrane. The segment covering 9–26 (GAGTKGPPAPAPAASGAA) has biased composition (low complexity). The chain crosses the membrane as a helical span at residues 87–107 (FWTHFIPLLLFLSKFCRLFFL). Residues 108–116 (SGGDVPFHH) are Extracellular-facing. Residues 117 to 137 (PWLLPLWCYASGVLLTFAMSC) form a helical membrane-spanning segment. At 138–162 (TAHVFSCLSLRLRAAFFYLDYASIS) the chain is on the cytoplasmic side. The chain crosses the membrane as a helical span at residues 163–183 (YYGFGSTVAYYYYLLPGLSLL). Residues 184–205 (DARVMTPYLQQRLGWHVDCTRL) lie on the Extracellular side of the membrane. A helical membrane pass occupies residues 206–226 (IAAYRALVLPVAFVLAVACTV). Over 227-243 (ACCKSRTDWCTYPFALR) the chain is Cytoplasmic. The chain crosses the membrane as a helical span at residues 244–264 (TFVFVMPLSMACPIMLESWLF). Topologically, residues 265–301 (DLRGENPTLFVHFYRRYFWLVVAAFFNVSKIPERIQP) are extracellular. A helical membrane pass occupies residues 302–322 (GLFDIIGHSHQLFHIFTFLSI). The Cytoplasmic segment spans residues 323-343 (YDQVYYVEEGLRQFLQAPPAA). The chain crosses the membrane as a helical span at residues 344–364 (PTFSGTVGYMLLLVVCLGLVI). Topologically, residues 365 to 377 (RKFLNSSEFCSKK) are extracellular.

Belongs to the ADIPOR family. Homodimer. As to expression, expression levels vary widely in a range of tissues. Expressed in the brain, at high level in the pituitary gland and also in hypothalamus, limbic system, caudate nucleus accumens, pons and olfactory bulb.

It is found in the cell membrane. Functionally, plasma membrane progesterone (P4) receptor coupled to G proteins. Seems to act through a G(s) mediated pathway. May be involved in regulating rapid P4 signaling in the nervous system. Also binds dehydroepiandrosterone (DHEA), pregnanolone, pregnenolone and allopregnanolone. In Homo sapiens (Human), this protein is Membrane progestin receptor epsilon.